Reading from the N-terminus, the 296-residue chain is Phosphatidylserine decarboxylase proenzyme (296 aa).

Residues Asp113, His169, and Ser256 each act as charge relay system; for autoendoproteolytic cleavage activity in the active site. The Schiff-base intermediate with substrate; via pyruvic acid; for decarboxylase activity role is filled by Ser256. Ser256 is subject to Pyruvic acid (Ser); by autocatalysis.

Belongs to the phosphatidylserine decarboxylase family. PSD-B subfamily. Prokaryotic type II sub-subfamily. In terms of assembly, heterodimer of a large membrane-associated beta subunit and a small pyruvoyl-containing alpha subunit. Pyruvate serves as cofactor. Is synthesized initially as an inactive proenzyme. Formation of the active enzyme involves a self-maturation process in which the active site pyruvoyl group is generated from an internal serine residue via an autocatalytic post-translational modification. Two non-identical subunits are generated from the proenzyme in this reaction, and the pyruvate is formed at the N-terminus of the alpha chain, which is derived from the carboxyl end of the proenzyme. The autoendoproteolytic cleavage occurs by a canonical serine protease mechanism, in which the side chain hydroxyl group of the serine supplies its oxygen atom to form the C-terminus of the beta chain, while the remainder of the serine residue undergoes an oxidative deamination to produce ammonia and the pyruvoyl prosthetic group on the alpha chain. During this reaction, the Ser that is part of the protease active site of the proenzyme becomes the pyruvoyl prosthetic group, which constitutes an essential element of the active site of the mature decarboxylase.

Its subcellular location is the cell membrane. It catalyses the reaction a 1,2-diacyl-sn-glycero-3-phospho-L-serine + H(+) = a 1,2-diacyl-sn-glycero-3-phosphoethanolamine + CO2. Its pathway is phospholipid metabolism; phosphatidylethanolamine biosynthesis; phosphatidylethanolamine from CDP-diacylglycerol: step 2/2. Catalyzes the formation of phosphatidylethanolamine (PtdEtn) from phosphatidylserine (PtdSer). The chain is Phosphatidylserine decarboxylase proenzyme from Clostridium botulinum (strain Alaska E43 / Type E3).